The following is a 121-amino-acid chain: Large ribosomal subunit protein uL18 (121 aa).

The protein belongs to the universal ribosomal protein uL18 family. As to quaternary structure, part of the 50S ribosomal subunit; part of the 5S rRNA/L5/L18/L25 subcomplex. Contacts the 5S and 23S rRNAs.

Functionally, this is one of the proteins that bind and probably mediate the attachment of the 5S RNA into the large ribosomal subunit, where it forms part of the central protuberance. The chain is Large ribosomal subunit protein uL18 from Mesomycoplasma hyopneumoniae (strain J / ATCC 25934 / NCTC 10110) (Mycoplasma hyopneumoniae).